A 272-amino-acid polypeptide reads, in one-letter code: Probable feruloyl esterase C (272 aa).

The N-terminal stretch at 1 to 22 (MVPTIIYSAILALSAFTPSVFA) is a signal peptide.

This sequence belongs to the faeC family.

The protein resides in the secreted. It catalyses the reaction feruloyl-polysaccharide + H2O = ferulate + polysaccharide.. Its function is as follows. Involved in degradation of plant cell walls. Hydrolyzes the feruloyl-arabinose ester bond in arabinoxylans, and the feruloyl-galactose ester bond in pectin. Active against paranitrophenyl-acetate, methyl ferulate and wheat arabinoxylan. In Aspergillus fumigatus (strain ATCC MYA-4609 / CBS 101355 / FGSC A1100 / Af293) (Neosartorya fumigata), this protein is Probable feruloyl esterase C (faeC).